Here is a 205-residue protein sequence, read N- to C-terminus: dITP/XTP pyrophosphatase (205 aa).

A substrate-binding site is contributed by 7-12 (SNNRGK). 2 residues coordinate Mg(2+): Glu-39 and Asp-68. Asp-68 functions as the Proton acceptor in the catalytic mechanism. Residues Ala-69, 154 to 157 (FGFD), Lys-177, and 182 to 183 (HR) each bind substrate.

The protein belongs to the HAM1 NTPase family. In terms of assembly, homodimer. Requires Mg(2+) as cofactor.

It catalyses the reaction XTP + H2O = XMP + diphosphate + H(+). It carries out the reaction dITP + H2O = dIMP + diphosphate + H(+). The catalysed reaction is ITP + H2O = IMP + diphosphate + H(+). Its function is as follows. Pyrophosphatase that catalyzes the hydrolysis of nucleoside triphosphates to their monophosphate derivatives, with a high preference for the non-canonical purine nucleotides XTP (xanthosine triphosphate), dITP (deoxyinosine triphosphate) and ITP. Seems to function as a house-cleaning enzyme that removes non-canonical purine nucleotides from the nucleotide pool, thus preventing their incorporation into DNA/RNA and avoiding chromosomal lesions. The polypeptide is dITP/XTP pyrophosphatase (Acidovorax ebreus (strain TPSY) (Diaphorobacter sp. (strain TPSY))).